Here is a 348-residue protein sequence, read N- to C-terminus: D-alanine--D-alanine ligase (348 aa).

Positions 132 to 334 constitute an ATP-grasp domain; the sequence is KRVLESIGIP…YPDLIEELVT (203 aa). Residue 162 to 217 participates in ATP binding; sequence LARLTFPIFVKPANMGSSVGISKAQTKVELRKAIQLALTYDSRVLIEQGVVAREIE. Mg(2+)-binding residues include Asp-288, Glu-301, and Asn-303.

It belongs to the D-alanine--D-alanine ligase family. Requires Mg(2+) as cofactor. Mn(2+) serves as cofactor.

The protein resides in the cytoplasm. It carries out the reaction 2 D-alanine + ATP = D-alanyl-D-alanine + ADP + phosphate + H(+). The protein operates within cell wall biogenesis; peptidoglycan biosynthesis. In terms of biological role, cell wall formation. The polypeptide is D-alanine--D-alanine ligase (Streptococcus pyogenes serotype M12 (strain MGAS2096)).